The sequence spans 363 residues: Chorismate synthase (363 aa).

NADP(+)-binding residues include R48 and R54. FMN is bound by residues 131 to 133 (RSS), 244 to 245 (NA), G288, 303 to 307 (KPTSS), and R329.

Belongs to the chorismate synthase family. In terms of assembly, homotetramer. Requires FMNH2 as cofactor.

It carries out the reaction 5-O-(1-carboxyvinyl)-3-phosphoshikimate = chorismate + phosphate. The protein operates within metabolic intermediate biosynthesis; chorismate biosynthesis; chorismate from D-erythrose 4-phosphate and phosphoenolpyruvate: step 7/7. Its function is as follows. Catalyzes the anti-1,4-elimination of the C-3 phosphate and the C-6 proR hydrogen from 5-enolpyruvylshikimate-3-phosphate (EPSP) to yield chorismate, which is the branch point compound that serves as the starting substrate for the three terminal pathways of aromatic amino acid biosynthesis. This reaction introduces a second double bond into the aromatic ring system. This Maricaulis maris (strain MCS10) (Caulobacter maris) protein is Chorismate synthase.